Reading from the N-terminus, the 307-residue chain is GTPase Era (307 aa).

In terms of domain architecture, Era-type G spans 17–186; that stretch reads RCGFVAIVGR…LELIKPYLPE (170 aa). Positions 25-32 are G1; the sequence is GRPNVGKS. 25–32 contacts GTP; sequence GRPNVGKS. A G2 region spans residues 51-55; sequence QTTRN. Positions 72–75 are G3; it reads DTPG. Residues 72-76 and 133-136 each bind GTP; these read DTPGF and NKID. The tract at residues 133-136 is G4; it reads NKID. A G5 region spans residues 165-167; the sequence is VSA. A KH type-2 domain is found at 217-293; the sequence is LGEELPYAMN…FLKVWVKVKS (77 aa).

Belongs to the TRAFAC class TrmE-Era-EngA-EngB-Septin-like GTPase superfamily. Era GTPase family. As to quaternary structure, monomer.

It is found in the cytoplasm. It localises to the cell inner membrane. An essential GTPase that binds both GDP and GTP, with rapid nucleotide exchange. Plays a role in 16S rRNA processing and 30S ribosomal subunit biogenesis and possibly also in cell cycle regulation and energy metabolism. This chain is GTPase Era, found in Neisseria meningitidis serogroup B (strain ATCC BAA-335 / MC58).